Reading from the N-terminus, the 200-residue chain is Protein GrpE (200 aa).

The tract at residues 15-47 is disordered; the sequence is DLEMDLNEEELEESEVNEDKEFEELDKSEEENE. Acidic residues predominate over residues 16–47; that stretch reads LEMDLNEEELEESEVNEDKEFEELDKSEEENE.

It belongs to the GrpE family. Homodimer.

Its subcellular location is the cytoplasm. In terms of biological role, participates actively in the response to hyperosmotic and heat shock by preventing the aggregation of stress-denatured proteins, in association with DnaK and GrpE. It is the nucleotide exchange factor for DnaK and may function as a thermosensor. Unfolded proteins bind initially to DnaJ; upon interaction with the DnaJ-bound protein, DnaK hydrolyzes its bound ATP, resulting in the formation of a stable complex. GrpE releases ADP from DnaK; ATP binding to DnaK triggers the release of the substrate protein, thus completing the reaction cycle. Several rounds of ATP-dependent interactions between DnaJ, DnaK and GrpE are required for fully efficient folding. This Clostridium tetani (strain Massachusetts / E88) protein is Protein GrpE.